We begin with the raw amino-acid sequence, 283 residues long: Plasma membrane ascorbate-dependent reductase CYBRD1 (283 aa).

The Cytoplasmic portion of the chain corresponds to 1–5 (MEGYK). Residues 6–30 (SFLAFLVSSLLLGFLGVIFTLVWVL) traverse the membrane as a helical segment. Residues 13–218 (SSLLLGFLGV…FGGLVVWMVT (206 aa)) form the Cytochrome b561 domain. At 31–45 (HWREGLGWDGGAAEF) the chain is on the extracellular side. The helical transmembrane segment at 46–67 (NWHPVLVTSGFIFIQGIAIIVY) threads the bilayer. Histidine 48, arginine 68, and lysine 77 together coordinate heme b. Topologically, residues 68–76 (RLPWTWKCS) are cytoplasmic. Positions 77 and 81 each coordinate L-ascorbate. Residues 77 to 103 (KLLMKFIHAGLHLTALIFTIVALVAVF) traverse the membrane as a helical segment. Histidine 84 contacts heme b. The Extracellular segment spans residues 104–116 (DFHNAKNIPNMYS). Residue histidine 106 participates in Fe(3+) binding. Heme b-binding positions include 113–116 (NMYS) and histidine 118. Residues 117 to 142 (LHSWIGLTVVILYALQLVLGVSIYLL) traverse the membrane as a helical segment. At 143-149 (PFASNTL) the chain is on the cytoplasmic side. Arginine 150 provides a ligand contact to L-ascorbate. A helical transmembrane segment spans residues 150–177 (RAALMPVHVYSGLFIFGTVIATALMGIT). Residues histidine 157 and glutamate 178 each contribute to the heme b site. The Extracellular portion of the chain corresponds to 178 to 195 (EKLIFSLKEPPYSKLPPE). Residues 196–220 (AIFVNTFGLLILVFGGLVVWMVTTP) form a helical membrane-spanning segment. At 221–283 (AWKRPREQGM…LDEAGQRSTM (63 aa)) the chain is on the cytoplasmic side. Lysine 223 contacts heme b. The segment at 234 to 262 (SPTVSSPDETEEGSTITDCSNTEKSDVEL) is disordered. Polar residues predominate over residues 235-253 (PTVSSPDETEEGSTITDCS).

Homodimer. The cofactor is heme b.

Its subcellular location is the cell membrane. The protein resides in the apical cell membrane. The catalysed reaction is Fe(3+)(out) + L-ascorbate(in) = monodehydro-L-ascorbate radical(in) + Fe(2+)(out) + H(+). It catalyses the reaction Cu(2+)(out) + L-ascorbate(in) = Cu(+)(out) + monodehydro-L-ascorbate radical(in) + H(+). The enzyme catalyses monodehydro-L-ascorbate radical(out) + L-ascorbate(in) = monodehydro-L-ascorbate radical(in) + L-ascorbate(out). In terms of biological role, plasma membrane reductase that uses cytoplasmic ascorbate as an electron donor to reduce extracellular Fe(3+) into Fe(2+). It is also able to reduce extracellular monodehydro-L-ascorbate and may be involved in extracellular ascorbate regeneration. May also function as a cupric transmembrane reductase. The protein is Plasma membrane ascorbate-dependent reductase CYBRD1 (cybrd1) of Xenopus laevis (African clawed frog).